The sequence spans 61 residues: Large ribosomal subunit protein bL28 (61 aa).

The protein belongs to the bacterial ribosomal protein bL28 family.

The sequence is that of Large ribosomal subunit protein bL28 from Geobacillus thermodenitrificans (strain NG80-2).